Here is a 347-residue protein sequence, read N- to C-terminus: 4-hydroxy-2-oxovalerate aldolase 4 (347 aa).

The Pyruvate carboxyltransferase domain occupies 9–259 (ITIVDTTLRD…DTGVDLFPLI (251 aa)). Substrate contacts are provided by residues 17–18 (RD), S171, and H198. D18 provides a ligand contact to Mn(2+). Positions 198 and 200 each coordinate Mn(2+). Residue Y289 participates in substrate binding.

It belongs to the 4-hydroxy-2-oxovalerate aldolase family.

The catalysed reaction is (S)-4-hydroxy-2-oxopentanoate = acetaldehyde + pyruvate. The chain is 4-hydroxy-2-oxovalerate aldolase 4 from Rhodococcus opacus (strain B4).